We begin with the raw amino-acid sequence, 241 residues long: Small ribosomal subunit protein uS2 (241 aa).

It belongs to the universal ribosomal protein uS2 family.

The protein is Small ribosomal subunit protein uS2 of Erwinia tasmaniensis (strain DSM 17950 / CFBP 7177 / CIP 109463 / NCPPB 4357 / Et1/99).